A 240-amino-acid chain; its full sequence is 1-(5-phosphoribosyl)-5-[(5-phosphoribosylamino)methylideneamino] imidazole-4-carboxamide isomerase (240 aa).

D8 serves as the catalytic Proton acceptor. Residue D129 is the Proton donor of the active site.

This sequence belongs to the HisA/HisF family.

It is found in the cytoplasm. The catalysed reaction is 1-(5-phospho-beta-D-ribosyl)-5-[(5-phospho-beta-D-ribosylamino)methylideneamino]imidazole-4-carboxamide = 5-[(5-phospho-1-deoxy-D-ribulos-1-ylimino)methylamino]-1-(5-phospho-beta-D-ribosyl)imidazole-4-carboxamide. The protein operates within amino-acid biosynthesis; L-histidine biosynthesis; L-histidine from 5-phospho-alpha-D-ribose 1-diphosphate: step 4/9. This is 1-(5-phosphoribosyl)-5-[(5-phosphoribosylamino)methylideneamino] imidazole-4-carboxamide isomerase from Listeria monocytogenes serotype 4b (strain CLIP80459).